Here is a 458-residue protein sequence, read N- to C-terminus: UDP-N-acetylmuramoylalanine--D-glutamate ligase (458 aa).

Residue 124–130 (GSDGKTT) participates in ATP binding.

It belongs to the MurCDEF family.

Its subcellular location is the cytoplasm. The enzyme catalyses UDP-N-acetyl-alpha-D-muramoyl-L-alanine + D-glutamate + ATP = UDP-N-acetyl-alpha-D-muramoyl-L-alanyl-D-glutamate + ADP + phosphate + H(+). Its pathway is cell wall biogenesis; peptidoglycan biosynthesis. Cell wall formation. Catalyzes the addition of glutamate to the nucleotide precursor UDP-N-acetylmuramoyl-L-alanine (UMA). This is UDP-N-acetylmuramoylalanine--D-glutamate ligase from Clostridium kluyveri (strain NBRC 12016).